Consider the following 612-residue polypeptide: Apoptosis-inducing factor 1, mitochondrial (612 aa).

Short sequence motifs (mitochondrial localization signal) lie at residues Met-1–Arg-30 and Lys-62–Lys-88. The transit peptide at Met-1 to Met-53 directs the protein to the mitochondrion. 2 propeptides (removed in mature form) span residues Ala-54–Gly-100 and Ser-55–Leu-101. At Lys-108 the chain carries N6-succinyllysine. Ser-115 bears the Phosphoserine mark. Residues Phe-133 to Trp-482 are FAD-dependent oxidoreductase. Residues Gly-137–Ala-141, Glu-163–Asp-164, Arg-171, and Lys-176 contribute to the FAD site. Trp-195 provides a ligand contact to NAD(+). Val-232 lines the FAD pocket. Lys-254 participates in a covalent cross-link: Glycyl lysine isopeptide (Lys-Gly) (interchain with G-Cter in ubiquitin). Ser-267 is modified (phosphoserine). Arg-284 contributes to the FAD binding site. NAD(+) contacts are provided by residues Gly-307 to Leu-310, Glu-335, and Lys-341. Phosphoserine is present on Ser-370. Position 387 is an N6-acetyllysine (Lys-387). Gly-398 lines the NAD(+) pocket. Asp-437 provides a ligand contact to FAD. Positions Lys-445–Arg-450 match the Nuclear localization signal motif. NAD(+) is bound by residues Glu-452–His-453, Trp-482, and Glu-492. FAD-binding positions include His-453 to His-454 and Trp-482. Residues Ala-512 to Arg-528 are compositionally biased toward polar residues. The interval Ala-512 to Gln-551 is disordered. Thr-520 bears the Phosphothreonine mark. 2 positions are modified to phosphoserine: Ser-523 and Ser-529. Asn-582 is a binding site for NAD(+). The residue at position 592 (Lys-592) is an N6-acetyllysine.

The protein belongs to the FAD-dependent oxidoreductase family. In terms of assembly, monomer (oxidized form). Homodimer (reduced form). Upon reduction with NADH, undergoes dimerization and forms tight, long-lived FADH2-NAD charge transfer complexes (CTC) resistant to oxidation. Also dimerizes with isoform 3 preventing its release from mitochondria. Interacts with XIAP/BIRC4. Interacts (via N-terminus) with EIF3G (via C-terminus). Interacts with PRELID1. Interacts with CHCHD4; the interaction increases in presence of NADH. Interacts with processed form of PARP1 (Poly [ADP-ribose] polymerase 1, processed C-terminus); interaction is mediated with poly-ADP-ribose chains attached to PARP1, promoting translocation into the nucleus. FAD serves as cofactor. In terms of processing, under normal conditions, a 54-residue N-terminal segment is first proteolytically removed during or just after translocation into the mitochondrial intermembrane space (IMS) by the mitochondrial processing peptidase (MPP) to form the inner-membrane-anchored mature form (AIFmit). During apoptosis, it is further proteolytically processed at amino-acid position 101 leading to the generation of the mature form, which is confined to the mitochondrial IMS in a soluble form (AIFsol). AIFsol is released to the cytoplasm in response to specific death signals, and translocated to the nucleus, where it induces nuclear apoptosis in a caspase-independent manner. Ubiquitination by XIAP/BIRC4 does not lead to proteasomal degradation. Ubiquitination at Lys-254 by XIAP/BIRC4 blocks its ability to bind DNA and induce chromatin degradation, thereby inhibiting its ability to induce cell death.

It is found in the mitochondrion intermembrane space. The protein localises to the mitochondrion inner membrane. It localises to the cytoplasm. Its subcellular location is the nucleus. The protein resides in the perinuclear region. It carries out the reaction A + NADH + H(+) = AH2 + NAD(+). Functions both as NADH oxidoreductase and as regulator of apoptosis. In response to apoptotic stimuli, it is released from the mitochondrion intermembrane space into the cytosol and to the nucleus, where it functions as a proapoptotic factor in a caspase-independent pathway. Release into the cytoplasm is mediated upon binding to poly-ADP-ribose chains. The soluble form (AIFsol) found in the nucleus induces 'parthanatos' i.e. caspase-independent fragmentation of chromosomal DNA. Binds to DNA in a sequence-independent manner. Interacts with EIF3G, and thereby inhibits the EIF3 machinery and protein synthesis, and activates caspase-7 to amplify apoptosis. Plays a critical role in caspase-independent, pyknotic cell death in hydrogen peroxide-exposed cells. In contrast, participates in normal mitochondrial metabolism. Plays an important role in the regulation of respiratory chain biogenesis by interacting with CHCHD4 and controlling CHCHD4 mitochondrial import. This Rattus norvegicus (Rat) protein is Apoptosis-inducing factor 1, mitochondrial (Aifm1).